A 1207-amino-acid chain; its full sequence is DNA-directed RNA polymerase subunit beta' (1207 aa).

The Zn(2+) site is built by C60, C62, C75, and C78. Mg(2+)-binding residues include D449, D451, and D453. Residues C822, C896, C903, and C906 each contribute to the Zn(2+) site.

It belongs to the RNA polymerase beta' chain family. In terms of assembly, the RNAP catalytic core consists of 2 alpha, 1 beta, 1 beta' and 1 omega subunit. When a sigma factor is associated with the core the holoenzyme is formed, which can initiate transcription. It depends on Mg(2+) as a cofactor. Requires Zn(2+) as cofactor.

It carries out the reaction RNA(n) + a ribonucleoside 5'-triphosphate = RNA(n+1) + diphosphate. DNA-dependent RNA polymerase catalyzes the transcription of DNA into RNA using the four ribonucleoside triphosphates as substrates. This Staphylococcus aureus (strain NCTC 8325 / PS 47) protein is DNA-directed RNA polymerase subunit beta'.